The following is a 244-amino-acid chain: MAQAVEEWYKQMPIITRSYLTAAVITTVGCSLDIISPYNLYLNPTLVVKQYQYWRLVTNFLYFRKMDLDFMFHMFFLARYCKLLEENSFRGKTADFLYMLLFGASVLTGIVLIGGMIPYLSASFAKIIFLSNSLTFMMVYVWSKQNPYIHMSFLGLFTFTAAYLPWVLLGFSILVGASAWVDLLGMIAGHAYYFLAEVYPRMTNRRPLKTPSFLKALFADEPVVVARPEDVRFAAAPFDEIHQD.

At 1-21 the chain is on the cytoplasmic side; that stretch reads MAQAVEEWYKQMPIITRSYLT. Residues 22–42 form a helical membrane-spanning segment; the sequence is AAVITTVGCSLDIISPYNLYL. The Lumenal segment spans residues 43–96; the sequence is NPTLVVKQYQYWRLVTNFLYFRKMDLDFMFHMFFLARYCKLLEENSFRGKTADF. The helical transmembrane segment at 97 to 117 threads the bilayer; that stretch reads LYMLLFGASVLTGIVLIGGMI. The Cytoplasmic segment spans residues 118–121; that stretch reads PYLS. A helical membrane pass occupies residues 122–142; it reads ASFAKIIFLSNSLTFMMVYVW. Topologically, residues 143–152 are lumenal; it reads SKQNPYIHMS. The chain crosses the membrane as a helical span at residues 153–173; sequence FLGLFTFTAAYLPWVLLGFSI. Residues 174–244 are Cytoplasmic-facing; the sequence is LVGASAWVDL…AAPFDEIHQD (71 aa).

The protein belongs to the derlin family.

Its subcellular location is the endoplasmic reticulum membrane. May be involved in the degradation process of specific misfolded endoplasmic reticulum (ER) luminal proteins. This is Derlin-2.2 (DER2.2) from Arabidopsis thaliana (Mouse-ear cress).